Here is a 361-residue protein sequence, read N- to C-terminus: Probable mannose-1-phosphate guanylyltransferase 1 (361 aa).

GDP-alpha-D-mannose is bound by residues leucine 6 and valine 7. Diphosphate-binding residues include glycine 9, glycine 11, threonine 12, arginine 13, and lysine 23. GDP-alpha-D-mannose is bound by residues glycine 85, asparagine 109, aspartate 111, glycine 146, and asparagine 173.

The protein belongs to the transferase hexapeptide repeat family.

The enzyme catalyses alpha-D-mannose 1-phosphate + GTP + H(+) = GDP-alpha-D-mannose + diphosphate. It participates in nucleotide-sugar biosynthesis; GDP-alpha-D-mannose biosynthesis; GDP-alpha-D-mannose from alpha-D-mannose 1-phosphate (GTP route): step 1/1. In terms of biological role, catalyzes a reaction of the Smirnoff-Wheeler pathway, the major route to ascorbate biosynthesis in plants. This Oryza sativa subsp. japonica (Rice) protein is Probable mannose-1-phosphate guanylyltransferase 1.